Here is a 425-residue protein sequence, read N- to C-terminus: 3-deoxy-D-manno-octulosonic acid transferase (425 aa).

The chain crosses the membrane as a helical; Signal-anchor span at residues 3-23 (ELLYTALLYLIQPLIWIRLWV). The Proton acceptor role is filled by Glu-60. Residues 268–269 (PR), 309–311 (MGE), and 335–338 (NPLE) each bind CMP.

This sequence belongs to the glycosyltransferase group 1 family. Glycosyltransferase 30 subfamily.

It is found in the cell inner membrane. The enzyme catalyses lipid IVA (E. coli) + CMP-3-deoxy-beta-D-manno-octulosonate = alpha-Kdo-(2-&gt;6)-lipid IVA (E. coli) + CMP + H(+). It catalyses the reaction alpha-Kdo-(2-&gt;6)-lipid IVA (E. coli) + CMP-3-deoxy-beta-D-manno-octulosonate = alpha-Kdo-(2-&gt;4)-alpha-Kdo-(2-&gt;6)-lipid IVA (E. coli) + CMP + H(+). It functions in the pathway glycolipid biosynthesis; KDO(2)-lipid A biosynthesis; KDO(2)-lipid A from CMP-3-deoxy-D-manno-octulosonate and lipid IV(A): step 1/4. It participates in glycolipid biosynthesis; KDO(2)-lipid A biosynthesis; KDO(2)-lipid A from CMP-3-deoxy-D-manno-octulosonate and lipid IV(A): step 2/4. The protein operates within bacterial outer membrane biogenesis; LPS core biosynthesis. Involved in lipopolysaccharide (LPS) biosynthesis. Catalyzes the transfer of two 3-deoxy-D-manno-octulosonate (Kdo) residues from CMP-Kdo to lipid IV(A), the tetraacyldisaccharide-1,4'-bisphosphate precursor of lipid A. The polypeptide is 3-deoxy-D-manno-octulosonic acid transferase (waaA) (Escherichia coli O157:H7).